Reading from the N-terminus, the 443-residue chain is Tubulin beta chain (443 aa).

GTP is bound by residues Gln11, Glu69, Ser138, Gly142, Thr143, Gly144, Asn204, and Asn226. Residue Glu69 coordinates Mg(2+). The interval 424-443 is disordered; sequence QYQDATAEEEGEFEEEEGEN. The segment covering 429–443 has biased composition (acidic residues); that stretch reads TAEEEGEFEEEEGEN.

The protein belongs to the tubulin family. In terms of assembly, dimer of alpha and beta chains. A typical microtubule is a hollow water-filled tube with an outer diameter of 25 nm and an inner diameter of 15 nM. Alpha-beta heterodimers associate head-to-tail to form protofilaments running lengthwise along the microtubule wall with the beta-tubulin subunit facing the microtubule plus end conferring a structural polarity. Microtubules usually have 13 protofilaments but different protofilament numbers can be found in some organisms and specialized cells. Requires Mg(2+) as cofactor. Post-translationally, some glutamate residues at the C-terminus are either polyglutamylated or polyglycylated. These 2 modifications occur exclusively on glutamate residues and result in either polyglutamate or polyglycine chains on the gamma-carboxyl group. Both modifications can coexist on the same protein on adjacent residues, and lowering polyglycylation levels increases polyglutamylation, and reciprocally. The precise function of such modifications is still unclear but they regulate the assembly and dynamics of axonemal microtubules.

The protein resides in the cytoplasm. It localises to the cytoskeleton. In terms of biological role, tubulin is the major constituent of microtubules, a cylinder consisting of laterally associated linear protofilaments composed of alpha- and beta-tubulin heterodimers. Microtubules grow by the addition of GTP-tubulin dimers to the microtubule end, where a stabilizing cap forms. Below the cap, tubulin dimers are in GDP-bound state, owing to GTPase activity of alpha-tubulin. In Tetrahymena thermophila, this protein is Tubulin beta chain (BTU1).